A 65-amino-acid chain; its full sequence is Large ribosomal subunit protein bL33c (65 aa).

This sequence belongs to the bacterial ribosomal protein bL33 family.

The protein localises to the plastid. Its subcellular location is the chloroplast. The protein is Large ribosomal subunit protein bL33c of Chaetosphaeridium globosum (Charophycean green alga).